The primary structure comprises 98 residues: NADH-ubiquinone oxidoreductase chain 4L (98 aa).

3 consecutive transmembrane segments (helical) span residues 1–21 (MSLV…GLLM), 29–49 (SLLC…LTIL), and 61–81 (IILL…LVMV).

This sequence belongs to the complex I subunit 4L family. As to quaternary structure, core subunit of respiratory chain NADH dehydrogenase (Complex I) which is composed of 45 different subunits.

The protein localises to the mitochondrion inner membrane. It catalyses the reaction a ubiquinone + NADH + 5 H(+)(in) = a ubiquinol + NAD(+) + 4 H(+)(out). Its function is as follows. Core subunit of the mitochondrial membrane respiratory chain NADH dehydrogenase (Complex I) which catalyzes electron transfer from NADH through the respiratory chain, using ubiquinone as an electron acceptor. Part of the enzyme membrane arm which is embedded in the lipid bilayer and involved in proton translocation. This Muntiacus feae (Fea's muntjac) protein is NADH-ubiquinone oxidoreductase chain 4L (MT-ND4L).